Consider the following 95-residue polypeptide: MNIIKVKVVYALPDIQYIKEVHIDSNSTVKDAILASNLLNTVKNIQFYKNNVGIYNKLVHLNENVKNGDRIEIYRNLIIDPKERRRKRSNICLKK.

The protein belongs to the UPF0125 (RnfH) family.

The chain is UPF0125 protein BUsg_244 from Buchnera aphidicola subsp. Schizaphis graminum (strain Sg).